The following is a 610-amino-acid chain: UvrABC system protein C (610 aa).

The GIY-YIG domain maps to 16–94; it reads SQPGVYRMYD…IKLYQPRYNV (79 aa). The 36-residue stretch at 204-239 folds into the UVR domain; the sequence is DQVLTQLIARMEKASQNLEFEEAARIRDQIQAVRRV.

This sequence belongs to the UvrC family. Interacts with UvrB in an incision complex.

The protein localises to the cytoplasm. The UvrABC repair system catalyzes the recognition and processing of DNA lesions. UvrC both incises the 5' and 3' sides of the lesion. The N-terminal half is responsible for the 3' incision and the C-terminal half is responsible for the 5' incision. The protein is UvrABC system protein C of Escherichia fergusonii (strain ATCC 35469 / DSM 13698 / CCUG 18766 / IAM 14443 / JCM 21226 / LMG 7866 / NBRC 102419 / NCTC 12128 / CDC 0568-73).